We begin with the raw amino-acid sequence, 101 residues long: NAD(P)H-quinone oxidoreductase subunit 4L, chloroplastic (101 aa).

A run of 3 helical transmembrane segments spans residues 2-22 (MFEH…YGLI), 32-52 (ICLE…SDLF), and 61-81 (IFAI…LSIL).

The protein belongs to the complex I subunit 4L family. As to quaternary structure, NDH is composed of at least 16 different subunits, 5 of which are encoded in the nucleus.

The protein resides in the plastid. It localises to the chloroplast thylakoid membrane. The catalysed reaction is a plastoquinone + NADH + (n+1) H(+)(in) = a plastoquinol + NAD(+) + n H(+)(out). The enzyme catalyses a plastoquinone + NADPH + (n+1) H(+)(in) = a plastoquinol + NADP(+) + n H(+)(out). Functionally, NDH shuttles electrons from NAD(P)H:plastoquinone, via FMN and iron-sulfur (Fe-S) centers, to quinones in the photosynthetic chain and possibly in a chloroplast respiratory chain. The immediate electron acceptor for the enzyme in this species is believed to be plastoquinone. Couples the redox reaction to proton translocation, and thus conserves the redox energy in a proton gradient. This Oryza nivara (Indian wild rice) protein is NAD(P)H-quinone oxidoreductase subunit 4L, chloroplastic.